Reading from the N-terminus, the 464-residue chain is Glutamate--tRNA ligase 1 (464 aa).

The 'HIGH' region motif lies at 8–18; that stretch reads PSPTGHLHVGG. The short motif at 231 to 235 is the 'KMSKS' region element; sequence PLSKR. Lysine 234 lines the ATP pocket.

This sequence belongs to the class-I aminoacyl-tRNA synthetase family. Glutamate--tRNA ligase type 1 subfamily. Monomer.

It is found in the cytoplasm. It catalyses the reaction tRNA(Glu) + L-glutamate + ATP = L-glutamyl-tRNA(Glu) + AMP + diphosphate. In terms of biological role, catalyzes the attachment of glutamate to tRNA(Glu) in a two-step reaction: glutamate is first activated by ATP to form Glu-AMP and then transferred to the acceptor end of tRNA(Glu). The sequence is that of Glutamate--tRNA ligase 1 from Thermotoga petrophila (strain ATCC BAA-488 / DSM 13995 / JCM 10881 / RKU-1).